The sequence spans 328 residues: Phosphate acyltransferase (328 aa).

The protein belongs to the PlsX family. As to quaternary structure, homodimer. Probably interacts with PlsY.

The protein resides in the cytoplasm. It catalyses the reaction a fatty acyl-[ACP] + phosphate = an acyl phosphate + holo-[ACP]. Its pathway is lipid metabolism; phospholipid metabolism. Its function is as follows. Catalyzes the reversible formation of acyl-phosphate (acyl-PO(4)) from acyl-[acyl-carrier-protein] (acyl-ACP). This enzyme utilizes acyl-ACP as fatty acyl donor, but not acyl-CoA. This is Phosphate acyltransferase from Mycoplasma genitalium (strain ATCC 33530 / DSM 19775 / NCTC 10195 / G37) (Mycoplasmoides genitalium).